The chain runs to 323 residues: tRNA U34 carboxymethyltransferase (323 aa).

Residues lysine 91, tryptophan 105, lysine 110, glycine 130, 152–154, 181–182, methionine 196, tyrosine 200, and arginine 315 each bind carboxy-S-adenosyl-L-methionine; these read DPT and IE.

This sequence belongs to the class I-like SAM-binding methyltransferase superfamily. CmoB family. In terms of assembly, homotetramer.

The enzyme catalyses carboxy-S-adenosyl-L-methionine + 5-hydroxyuridine(34) in tRNA = 5-carboxymethoxyuridine(34) in tRNA + S-adenosyl-L-homocysteine + H(+). Its function is as follows. Catalyzes carboxymethyl transfer from carboxy-S-adenosyl-L-methionine (Cx-SAM) to 5-hydroxyuridine (ho5U) to form 5-carboxymethoxyuridine (cmo5U) at position 34 in tRNAs. In Salmonella paratyphi A (strain ATCC 9150 / SARB42), this protein is tRNA U34 carboxymethyltransferase.